A 274-amino-acid polypeptide reads, in one-letter code: 2-succinyl-6-hydroxy-2,4-cyclohexadiene-1-carboxylate synthase (274 aa).

It belongs to the AB hydrolase superfamily. MenH family. In terms of assembly, monomer.

The enzyme catalyses 5-enolpyruvoyl-6-hydroxy-2-succinyl-cyclohex-3-ene-1-carboxylate = (1R,6R)-6-hydroxy-2-succinyl-cyclohexa-2,4-diene-1-carboxylate + pyruvate. It functions in the pathway quinol/quinone metabolism; 1,4-dihydroxy-2-naphthoate biosynthesis; 1,4-dihydroxy-2-naphthoate from chorismate: step 3/7. The protein operates within quinol/quinone metabolism; menaquinone biosynthesis. Its function is as follows. Catalyzes a proton abstraction reaction that results in 2,5-elimination of pyruvate from 2-succinyl-5-enolpyruvyl-6-hydroxy-3-cyclohexene-1-carboxylate (SEPHCHC) and the formation of 2-succinyl-6-hydroxy-2,4-cyclohexadiene-1-carboxylate (SHCHC). The protein is 2-succinyl-6-hydroxy-2,4-cyclohexadiene-1-carboxylate synthase of Yersinia enterocolitica serotype O:8 / biotype 1B (strain NCTC 13174 / 8081).